The following is a 353-amino-acid chain: Guanine nucleotide-binding protein alpha-1 subunit (353 aa).

A lipid anchor (N-myristoyl glycine) is attached at Gly2. Cys3 carries the S-palmitoyl cysteine lipid modification. Residues 32–353 (NEIKMLLLGA…QVNLRDCGLL (322 aa)) form the G-alpha domain. The G1 motif stretch occupies residues 35 to 48 (KMLLLGAGESGKST). The GTP site is built by Glu43, Ser44, Gly45, Lys46, Ser47, Thr48, Asp150, Leu175, Thr181, Gly203, Asn269, Lys270, Asp272, and Ala325. Ser47 provides a ligand contact to Mg(2+). Residues 173-181 (DVLRSRVKT) form a G2 motif region. Thr181 lines the Mg(2+) pocket. The segment at 196-205 (YKLFDVGGQR) is G3 motif. Residues 265-272 (ILFLNKID) are G4 motif. The interval 323–328 (TCATDT) is G5 motif.

This sequence belongs to the G-alpha family. G proteins are composed of 3 units; alpha, beta and gamma. The alpha chain contains the guanine nucleotide binding site. It depends on Mg(2+) as a cofactor.

In terms of biological role, guanine nucleotide-binding proteins (G proteins) are involved as modulators or transducers in various transmembrane signaling systems. The chain is Guanine nucleotide-binding protein alpha-1 subunit (GPA1) from Mycosarcoma maydis (Corn smut fungus).